The following is a 478-amino-acid chain: Divinyl ether synthase CYP74D1 (478 aa).

Cysteine 431 is a heme binding site.

Belongs to the cytochrome P450 family. 9-divinyl ether synthase subfamily. As to expression, expressed in roots. Detected in stems, but not in flower buds, petioles, cotyledons or leaves.

It carries out the reaction (9S)-hydroperoxy-(10E,12Z)-octadecadienoate = colneleate + H2O. The catalysed reaction is (9S)-hydroperoxy-(10E,12Z,15Z)-octadecatrienoate = colnelenate + H2O. Involved in the biosynthesis of the anti-fungal toxins colneleate and colnelenate. Can use (9S)-hydroperoxy-(10E,12Z)-octadecadienoate (9-HPOD) and (9S)-hydroperoxy-(10E,12Z,15Z)-octadecatrienoate (9-HPOT) as substrates, but has a very low activity with the corresponding 13-hydroperoxides (13-HPOD and 13-POT). The protein is Divinyl ether synthase CYP74D1 of Solanum lycopersicum (Tomato).